Consider the following 914-residue polypeptide: Protein translocase subunit SecA (914 aa).

ATP-binding positions include glutamine 87, 105-109 (GEGKT), and aspartate 508. Residues cysteine 898, cysteine 900, cysteine 909, and histidine 910 each contribute to the Zn(2+) site.

It belongs to the SecA family. In terms of assembly, monomer and homodimer. Part of the essential Sec protein translocation apparatus which comprises SecA, SecYEG and auxiliary proteins SecDF-YajC and YidC. Requires Zn(2+) as cofactor.

It localises to the cell inner membrane. It is found in the cytoplasm. It carries out the reaction ATP + H2O + cellular proteinSide 1 = ADP + phosphate + cellular proteinSide 2.. In terms of biological role, part of the Sec protein translocase complex. Interacts with the SecYEG preprotein conducting channel. Has a central role in coupling the hydrolysis of ATP to the transfer of proteins into and across the cell membrane, serving both as a receptor for the preprotein-SecB complex and as an ATP-driven molecular motor driving the stepwise translocation of polypeptide chains across the membrane. In Xylella fastidiosa (strain 9a5c), this protein is Protein translocase subunit SecA.